Reading from the N-terminus, the 435-residue chain is Cytochrome c biogenesis protein Ccs1 (435 aa).

The next 3 membrane-spanning stretches (helical) occupy residues 17–37 (LSLSISLLLLIASISIIGTII), 77–97 (NPCFVLVLVLFFCSLLACTFS), and 163–183 (IAPIVVHFSIILTFIGSLISL).

Belongs to the Ccs1/CcsB family. In terms of assembly, may interact with CcsA.

The protein resides in the plastid. The protein localises to the chloroplast thylakoid membrane. Required during biogenesis of c-type cytochromes (cytochrome c6 and cytochrome f) at the step of heme attachment. In Gracilaria tenuistipitata var. liui (Red alga), this protein is Cytochrome c biogenesis protein Ccs1.